A 326-amino-acid polypeptide reads, in one-letter code: Meiotically up-regulated gene 113 protein (326 aa).

It localises to the cytoplasm. Has a role in meiosis. This is Meiotically up-regulated gene 113 protein (mug113) from Schizosaccharomyces pombe (strain 972 / ATCC 24843) (Fission yeast).